Here is a 331-residue protein sequence, read N- to C-terminus: uncharacterized protein (331 aa).

Pentapeptide repeat domains follow at residues 50–89 (ENLQ…RLGH), 90–129 (CQMN…NFKG), 140–179 (ANLR…NLQE), 185–224 (ANLR…KLTG), and 230–269 (TNLS…NLTQ).

This is an uncharacterized protein from Synechocystis sp. (strain ATCC 27184 / PCC 6803 / Kazusa).